The chain runs to 204 residues: N-(5'-phosphoribosyl)anthranilate isomerase (204 aa).

The protein belongs to the TrpF family.

The catalysed reaction is N-(5-phospho-beta-D-ribosyl)anthranilate = 1-(2-carboxyphenylamino)-1-deoxy-D-ribulose 5-phosphate. Its pathway is amino-acid biosynthesis; L-tryptophan biosynthesis; L-tryptophan from chorismate: step 3/5. The sequence is that of N-(5'-phosphoribosyl)anthranilate isomerase from Bacillus thuringiensis (strain Al Hakam).